Here is a 184-residue protein sequence, read N- to C-terminus: Shikimate kinase (184 aa).

Residue 12–17 (GSGKST) participates in ATP binding. Ser16 contributes to the Mg(2+) binding site. 3 residues coordinate substrate: Asp34, Arg58, and Gly80. Arg117 lines the ATP pocket. Residue Arg136 coordinates substrate. Position 153 (Arg153) interacts with ATP. Residues 164–184 (SRLDDPTPNTSPSSTASGAAT) are disordered. Low complexity predominate over residues 169-184 (PTPNTSPSSTASGAAT).

It belongs to the shikimate kinase family. As to quaternary structure, monomer. The cofactor is Mg(2+).

It is found in the cytoplasm. It catalyses the reaction shikimate + ATP = 3-phosphoshikimate + ADP + H(+). The protein operates within metabolic intermediate biosynthesis; chorismate biosynthesis; chorismate from D-erythrose 4-phosphate and phosphoenolpyruvate: step 5/7. Its function is as follows. Catalyzes the specific phosphorylation of the 3-hydroxyl group of shikimic acid using ATP as a cosubstrate. This is Shikimate kinase from Mycobacterium ulcerans (strain Agy99).